The following is a 203-amino-acid chain: Imidazoleglycerol-phosphate dehydratase (203 aa).

It belongs to the imidazoleglycerol-phosphate dehydratase family.

It localises to the cytoplasm. The catalysed reaction is D-erythro-1-(imidazol-4-yl)glycerol 3-phosphate = 3-(imidazol-4-yl)-2-oxopropyl phosphate + H2O. The protein operates within amino-acid biosynthesis; L-histidine biosynthesis; L-histidine from 5-phospho-alpha-D-ribose 1-diphosphate: step 6/9. The sequence is that of Imidazoleglycerol-phosphate dehydratase from Salinispora arenicola (strain CNS-205).